The following is a 505-amino-acid chain: 2,3-bisphosphoglycerate-independent phosphoglycerate mutase (505 aa).

Residues Asp11 and Ser61 each coordinate Mn(2+). Catalysis depends on Ser61, which acts as the Phosphoserine intermediate. Substrate is bound by residues His122, 152–153 (RD), Arg183, Arg189, 259–262 (RTDR), and Lys332. Residues Asp399, His403, Asp440, His441, and His458 each coordinate Mn(2+).

Belongs to the BPG-independent phosphoglycerate mutase family. As to quaternary structure, monomer. Requires Mn(2+) as cofactor.

The catalysed reaction is (2R)-2-phosphoglycerate = (2R)-3-phosphoglycerate. It functions in the pathway carbohydrate degradation; glycolysis; pyruvate from D-glyceraldehyde 3-phosphate: step 3/5. Catalyzes the interconversion of 2-phosphoglycerate and 3-phosphoglycerate. This chain is 2,3-bisphosphoglycerate-independent phosphoglycerate mutase, found in Flavobacterium psychrophilum (strain ATCC 49511 / DSM 21280 / CIP 103535 / JIP02/86).